A 183-amino-acid polypeptide reads, in one-letter code: MIIKREMRQDKRAAPKAPINENISAREVRLIGADGEQIGIVSIDEALRIAEEAKLDLVEISADAVPPVCRVMDYGKSIFEKKKQVAAAKKNQKQIQVKEIKFRPGTEEGDYQVKLRNLVRFLSDGDRAKVSLRFRGREMAHQELGMELLKRVEGDLLEYGSVEQHPKMEGRQLIMVIAPKKKK.

This sequence belongs to the IF-3 family. Monomer.

Its subcellular location is the cytoplasm. IF-3 binds to the 30S ribosomal subunit and shifts the equilibrium between 70S ribosomes and their 50S and 30S subunits in favor of the free subunits, thus enhancing the availability of 30S subunits on which protein synthesis initiation begins. This chain is Translation initiation factor IF-3, found in Pseudomonas syringae pv. tomato (strain ATCC BAA-871 / DC3000).